The following is a 618-amino-acid chain: uncharacterized protein (618 aa).

A signal peptide spans 1–29; it reads MSFLVLPPEVNSALMFAGAGSGPTLAAAA. The disordered stretch occupies residues 598–618; that stretch reads SGDNSSGGFNAGNDQSGFFDG.

It belongs to the mycobacterial PPE family.

This is an uncharacterized protein from Mycobacterium tuberculosis (strain ATCC 25618 / H37Rv).